A 332-amino-acid chain; its full sequence is Homoarginine-6-hydroxylase 2-ODD-C23.1 (332 aa).

In terms of domain architecture, Fe2OG dioxygenase spans 182–287; sequence PFWVMRLIGY…RVCVAFFYET (106 aa). Fe cation contacts are provided by H210, D212, and H268. Residue R278 participates in 2-oxoglutarate binding.

It belongs to the iron/ascorbate-dependent oxidoreductase family. The cofactor is Fe(2+).

It is found in the cytoplasm. Its subcellular location is the cytosol. It catalyses the reaction L-homoarginine + 2-oxoglutarate + O2 = 6-hydroxy-L-homoarginine + succinate + CO2. Slightly inhibited by canavanine (Can), the 5-oxa-analog of arginine. Functionally, 2-oxoglutarate-dependent dioxygenase catalyzing homoarginine 6-hydroxylation thus producing 6-hydroxy-L-homoarginine. Guanidine (Gd) is in turn synthesized by the spontaneous conversion of 6-hydroxy-L-homoarginine to (S)-2-amino-6-oxohexanoate (RHEA:79843); guanidine is a nitrogen-rich compound that can serve as a defense or signaling substance. This Arabidopsis thaliana (Mouse-ear cress) protein is Homoarginine-6-hydroxylase 2-ODD-C23.1.